The chain runs to 90 residues: Probable Fe(2+)-trafficking protein (90 aa).

The protein belongs to the Fe(2+)-trafficking protein family. Monomer.

Functionally, could be a mediator in iron transactions between iron acquisition and iron-requiring processes, such as synthesis and/or repair of Fe-S clusters in biosynthetic enzymes. This is Probable Fe(2+)-trafficking protein from Yersinia pestis bv. Antiqua (strain Antiqua).